A 571-amino-acid chain; its full sequence is Putative clathrin assembly protein At2g01600 (571 aa).

The 138-residue stretch at 24 to 161 folds into the ENTH domain; the sequence is RVNSEYADLD…ECFRVLKYDT (138 aa). Disordered stretches follow at residues 325-346 and 474-571; these read YRPD…REML and PAPN…TGLI. Residues 337 to 346 show a composition bias toward basic and acidic residues; that stretch reads EPSHEEREML. Positions 508–522 are enriched in low complexity; the sequence is QQTYQHQPQPTYQHQ. Composition is skewed to polar residues over residues 523-532 and 543-571; these read SNPPTNNSNP and PVSQ…TGLI.

The protein resides in the membrane. Its subcellular location is the clathrin-coated pit. It is found in the golgi apparatus. It localises to the cytoplasmic vesicle. The protein localises to the clathrin-coated vesicle. The sequence is that of Putative clathrin assembly protein At2g01600 from Arabidopsis thaliana (Mouse-ear cress).